The following is a 1203-amino-acid chain: Metabotropic glutamate receptor 5 (1203 aa).

The N-terminal stretch at 1–18 (MVLLLILSVLLLKEDVRG) is a signal peptide. The Extracellular portion of the chain corresponds to 19-579 (SAQSSERRVV…QYLRWGDPEP (561 aa)). A disulfide bridge connects residues Cys-57 and Cys-99. Tyr-64 is an L-glutamate binding site. N-linked (GlcNAc...) asparagine glycosylation is present at Asn-88. Residues Ser-151 and 172-174 (SAT) contribute to the L-glutamate site. A glycan (N-linked (GlcNAc...) asparagine) is linked at Asn-209. Tyr-222 is an L-glutamate binding site. Disulfide bonds link Cys-240/Cys-529, Cys-275/Cys-277, Cys-364/Cys-380, Cys-418/Cys-425, Cys-510/Cys-530, Cys-514/Cys-533, Cys-536/Cys-548, and Cys-551/Cys-564. L-glutamate is bound at residue Asp-304. 2 N-linked (GlcNAc...) asparagine glycosylation sites follow: Asn-377 and Asn-381. Residue Lys-395 coordinates L-glutamate. A glycan (N-linked (GlcNAc...) asparagine) is linked at Asn-444. A helical membrane pass occupies residues 580-602 (IAAVVFACLGLLATLFVTVIFII). Topologically, residues 603–612 (YRDTPVVKSS) are cytoplasmic. The chain crosses the membrane as a helical span at residues 613 to 635 (SRELCYIILAGICLGYLCTFCLI). The Extracellular portion of the chain corresponds to 636-643 (AKPKQIYC). Cys-643 and Cys-732 form a disulfide bridge. Residues 644–666 (YLQRIGIGLSPAMSYSALVTKTN) traverse the membrane as a helical segment. The Cytoplasmic portion of the chain corresponds to 667–692 (RIARILAGSKKKICTKKPRFMSACAQ). A helical membrane pass occupies residues 693–713 (LVIAFILICIQLGIIVALFIM). Residues 714-736 (EPPDIMHDYPSIREVYLICNTTN) are Extracellular-facing. An N-linked (GlcNAc...) asparagine glycan is attached at Asn-733. A helical membrane pass occupies residues 737-758 (LGVVTPLGYNGLLILSCTFYAF). Residues 759–771 (KTRNVPANFNEAK) lie on the Cytoplasmic side of the membrane. Residues 772-794 (YIAFTMYTTCIIWLAFVPIYFGS) traverse the membrane as a helical segment. The Extracellular segment spans residues 795–797 (NYK). Residues 798-819 (IITMCFSVSLSATVALGCMFVP) traverse the membrane as a helical segment. Over 820–1203 (KVYIILAKPE…RDYTQSSSSL (384 aa)) the chain is Cytoplasmic. Ser-860 carries the phosphoserine modification. Arg-868 carries the post-translational modification Omega-N-methylarginine. 2 disordered regions span residues 892 to 1054 (FTPK…GSLM) and 1120 to 1182 (TGGA…ALCI). Residues 905-920 (TMSSSNGKSVTWAQNE) are compositionally biased toward polar residues. Arg-924 is modified (omega-N-methylarginine). Residues 960-977 (QGAGAGGGSGPGAAGAGS) are compositionally biased toward gly residues. The span at 1007–1019 (PAAARPRSPSPIS) shows a compositional bias: low complexity. Ser-1014 and Ser-1016 each carry phosphoserine. Composition is skewed to polar residues over residues 1039-1054 (HSET…GSLM) and 1165-1176 (DSGSTTPNSPVS).

The protein belongs to the G-protein coupled receptor 3 family. As to quaternary structure, the PPXXF motif binds HOMER1, HOMER2 and HOMER3. Interacts with RYR1, RYR2, ITPR1, SHANK1 and SHANK3. Interacts with SIAH1 and TAMALIN. Interacts with NCDN. Interacts with NECAB2. Interacts with CAMK2A.

It is found in the cell membrane. Its function is as follows. G-protein coupled receptor for glutamate. Ligand binding causes a conformation change that triggers signaling via guanine nucleotide-binding proteins (G proteins) and modulates the activity of down-stream effectors. Signaling activates a phosphatidylinositol-calcium second messenger system and generates a calcium-activated chloride current. Plays an important role in the regulation of synaptic plasticity and the modulation of the neural network activity. The chain is Metabotropic glutamate receptor 5 (Grm5) from Mus musculus (Mouse).